The chain runs to 197 residues: uncharacterized protein (197 aa).

The signal sequence occupies residues 1–30 (MSTYIIINIALLIAIVALIFFLSKKTKSEA).

This is an uncharacterized protein from Acanthamoeba polyphaga (Amoeba).